Here is a 244-residue protein sequence, read N- to C-terminus: 15,16-dihydrobiliverdin:ferredoxin oxidoreductase (244 aa).

This sequence belongs to the HY2 family.

It catalyses the reaction 15,16-dihydrobiliverdin + oxidized 2[4Fe-4S]-[ferredoxin] = biliverdin IXalpha + reduced 2[4Fe-4S]-[ferredoxin] + 2 H(+). In terms of biological role, catalyzes the two-electron reduction of biliverdin IX-alpha at the C15 methine bridge. This chain is 15,16-dihydrobiliverdin:ferredoxin oxidoreductase (pebA), found in Nostoc punctiforme (strain ATCC 29133 / PCC 73102).